Reading from the N-terminus, the 579-residue chain is Mitogen-activated protein kinase kinase kinase 7 (579 aa).

The interval 1 to 300 (MSTASAASSS…FPGADEPLQY (300 aa)) is interaction with MAPK8IP1. The 256-residue stretch at 36-291 (IEVEEVVGRG…KIMTHLMRYF (256 aa)) folds into the Protein kinase domain. ATP is bound by residues 42 to 50 (VGRGAFGVV) and K63. K72 is covalently cross-linked (Glycyl lysine isopeptide (Lys-Gly) (interchain with G-Cter in ubiquitin)). The Proton acceptor role is filled by D156. A Glycyl lysine isopeptide (Lys-Gly) (interchain with G-Cter in ubiquitin) cross-link involves residue K158. A phosphothreonine; by autocatalysis mark is found at T184 and T187. At S192 the chain carries Phosphoserine; by autocatalysis. Residue K209 forms a Glycyl lysine isopeptide (Lys-Gly) (interchain with G-Cter in ubiquitin) linkage. 2 disordered regions span residues 301–339 (PCQY…EQVP) and 354–391 (KNQA…MSAD). Polar residues predominate over residues 306–322 (DEGQSNSATSTGSFMDI). Composition is skewed to low complexity over residues 323–334 (TSTNTSNKSDTN) and 361–375 (SESG…RGSS). Phosphoserine is present on residues S367, S389, and S412. Positions 416 to 425 (LTVTGTDPGQ) are enriched in polar residues. The segment at 416-466 (LTVTGTDPGQVSSRSSSPSVRMITTSGPTSEKPARSHPWTPDDSTDTNGSD) is disordered. The segment covering 426–436 (VSSRSSSPSVR) has biased composition (low complexity). S428 bears the Phosphoserine mark.

It belongs to the protein kinase superfamily. STE Ser/Thr protein kinase family. MAP kinase kinase kinase subfamily. Can form homodimer. Binds both upstream activators and downstream substrates in multimolecular complexes. Interacts with TAB1/MAP3K7IP1, TAB2/MAP3K7IP2 and TAB3/MAP3K7IP3. Identified in the TRIKA2 complex composed of MAP3K7/TAK1, TAB1/MAP3K7IP1 and TAB2/MAP3K7IP2. Interacts with PPM1L and PPM1B/PP2CB. Interaction with PP2A and PPP6C leads to its repressed activity. Interacts with TRAF6 and TAB1/MAP3K7IP1; during IL-1 signaling. Interacts with TAOK1 and TAOK2; interaction with TAOK2 interferes with MAP3K7 interaction with IKKA, thus preventing NF-kappa-B activation. Interacts with DYNC2I2 (via WD domains). Interacts with CYLD and RBCK1. Interacts with TGFBR1; induces MAP3K7/TAK1 activation by TRAF6. Interacts with MAPK8IP1 and SMAD6. Interacts with isoform 1 of VRK2. Interacts with DAB2; the interaction is induced by TGF-beta stimulation and may mediate TGF-beta stimulated JNK activation. Interacts with TRIM5. Part of a complex containing ITCH, NDFIP1 and MAP3K7. Interacts with IFIT5; the interaction synergizes the recruitment of IKK to MAP3K7 and enhances IKK phosphorylation. Interacts with PLEKHM1 (via N- and C-terminus). Found in a complex with SH3RF1, RAC2, MAP2K7/MKK7, MAPK8IP1/JIP1, MAPK8/JNK1 and MAPK9/JNK2. Interacts with SASH1. Interacts with RIPK1. Requires Mg(2+) as cofactor. Association with TAB1/MAP3K7IP1 promotes autophosphorylation at Ser-192 and subsequent activation. Association with TAB2/MAP3K7IP2, itself associated with free unanchored Lys-63 polyubiquitin chain, promotes autophosphorylation and subsequent activation of MAP3K7. Dephosphorylation at Ser-192 by PPM1B/PP2CB and at Thr-187 by PP2A and PPP6C leads to inactivation. In terms of processing, 'Lys-48'-linked polyubiquitination at Lys-72 is induced by TNFalpha, and leads to proteasomal degradation. Undergoes 'Lys-48'-linked polyubiquitination catalyzed by ITCH. 'Lys-63'-linked polyubiquitination at Lys-158 by TRIM8 does not lead to proteasomal degradation but contributes to autophosphorylation and activation. Deubiquitinated by CYLD, a protease that selectively cleaves 'Lys-63'-linked ubiquitin chains. Deubiquitinated by USP19; leading to negative regulation of TNF-alpha- and IL-1beta-triggered NF-kappa-B activation.

Its subcellular location is the cytoplasm. It is found in the cell membrane. It carries out the reaction L-seryl-[protein] + ATP = O-phospho-L-seryl-[protein] + ADP + H(+). The enzyme catalyses L-threonyl-[protein] + ATP = O-phospho-L-threonyl-[protein] + ADP + H(+). Activated by pro-inflammatory cytokines and in response to physical and chemical stresses, including osmotic stress, oxidative stress, arsenic and ultraviolet light irradiation. Activated by 'Lys-63'-linked polyubiquitination and by autophosphorylation. Association with TAB1/MAP3K7IP1 and TAB2/MAP3K7IP2 promotes activation through autophosphorylation, whereas PPM1B/PP2CB, PP2A and PPP6C dephosphorylation leads to inactivation. Ceramides are also able to activate MAP3K7/TAK1. Its function is as follows. Serine/threonine kinase which acts as an essential component of the MAP kinase signal transduction pathway. Plays an important role in the cascades of cellular responses evoked by changes in the environment. Mediates signal transduction of TRAF6, various cytokines including interleukin-1 (IL-1), transforming growth factor-beta (TGFB), TGFB-related factors like BMP2 and BMP4, toll-like receptors (TLR), tumor necrosis factor receptor CD40 and B-cell receptor (BCR). Once activated, acts as an upstream activator of the MKK/JNK signal transduction cascade and the p38 MAPK signal transduction cascade through the phosphorylation and activation of several MAP kinase kinases like MAP2K1/MEK1, MAP2K3/MKK3, MAP2K6/MKK6 and MAP2K7/MKK7. These MAP2Ks in turn activate p38 MAPKs and c-jun N-terminal kinases (JNKs); both p38 MAPK and JNK pathways control the transcription factors activator protein-1 (AP-1). Independently of MAP2Ks and p38 MAPKs, acts as a key activator of NF-kappa-B by promoting activation of the I-kappa-B-kinase (IKK) core complex. Mechanistically, recruited to polyubiquitin chains of RIPK2 and IKBKG/NEMO via TAB2/MAP3K7IP2 and TAB3/MAP3K7IP3, and catalyzes phosphorylation and activation of IKBKB/IKKB component of the IKK complex, leading to NF-kappa-B activation. In osmotic stress signaling, plays a major role in the activation of MAPK8/JNK1, but not that of NF-kappa-B. Promotes TRIM5 capsid-specific restriction activity. Phosphorylates RIPK1 at 'Ser-321' which positively regulates RIPK1 interaction with RIPK3 to promote necroptosis but negatively regulates RIPK1 kinase activity and its interaction with FADD to mediate apoptosis. Phosphorylates STING1 in response to cGAMP-activation, promoting association between STEEP1 and STING1 and STING1 translocation to COPII vesicles. The polypeptide is Mitogen-activated protein kinase kinase kinase 7 (MAP3K7) (Bos taurus (Bovine)).